Consider the following 514-residue polypeptide: Glutamyl-tRNA(Gln) amidotransferase subunit B, mitochondrial (514 aa).

It belongs to the GatB/GatE family. GatB subfamily. As to quaternary structure, subunit of the heterotrimeric GatCAB amidotransferase (AdT) complex, composed of A, B and C subunits.

The protein localises to the mitochondrion. It carries out the reaction L-glutamyl-tRNA(Gln) + L-glutamine + ATP + H2O = L-glutaminyl-tRNA(Gln) + L-glutamate + ADP + phosphate + H(+). Allows the formation of correctly charged Gln-tRNA(Gln) through the transamidation of misacylated Glu-tRNA(Gln) in the mitochondria. The reaction takes place in the presence of glutamine and ATP through an activated gamma-phospho-Glu-tRNA(Gln). The polypeptide is Glutamyl-tRNA(Gln) amidotransferase subunit B, mitochondrial (Naegleria gruberi (Amoeba)).